A 200-amino-acid polypeptide reads, in one-letter code: BREX protein BrxA (200 aa).

It belongs to the BrxA family.

BREX systems (bacteriophage exclusion) provide immunity against bacteriophage. Part of a type 1 BREX system. This system allows phage adsorption but prevents phage DNA replication, without degradation of the phage DNA. Methylation of bacterial DNA by PglX probably guides self/non-self discrimination. When the brxA-brxB-brxC-pglX and pglZ-brxL operons are transformed into a susceptible B.subtilis strain (BEST7003) they confer resistance to bacteriophages SPbeta, SP16, Zeta, phi3T and SP02 and partial protection to phages SP01 and SP82G (these include lytic and temperate phage). They do not protect against phages phi105, rho10 or rho14. Additionally confers a very slight reduction in efficiency of plasmid transformation. This Bacillus cereus (strain H3081.97) protein is BREX protein BrxA.